Reading from the N-terminus, the 458-residue chain is Exodeoxyribonuclease 7 large subunit (458 aa).

The protein belongs to the XseA family. Heterooligomer composed of large and small subunits.

It is found in the cytoplasm. The catalysed reaction is Exonucleolytic cleavage in either 5'- to 3'- or 3'- to 5'-direction to yield nucleoside 5'-phosphates.. Functionally, bidirectionally degrades single-stranded DNA into large acid-insoluble oligonucleotides, which are then degraded further into small acid-soluble oligonucleotides. The protein is Exodeoxyribonuclease 7 large subunit of Escherichia coli (strain UTI89 / UPEC).